Here is a 306-residue protein sequence, read N- to C-terminus: MYDTDPHRRGSRPGPYHGKERRRSRSSAAGGTLGVVRRASRKSLPPHARKQELCLHERQRYRGLFAALAQTPSEEIAIVRSLSVPLVKTTPVSLPFCLDQTVADNCLTLSGMGYYLGIGGCCPACNAGDGRFAATSREALILAFVQQINTIFEHRAFLASLVVLADRHNAPLQDLLAGILGQPELFFVHTILRGGGACDPRLLFYPDPTYGGHMLYVIFPGTSAHLHYRLIDRMLTACPGYRFVAHVWQSTFVLVVRRNAEKPTDAEIPTVSAADIYCKMRDISFDGGLMLEYQRLYATFDEFPPP.

The interval 1–49 (MYDTDPHRRGSRPGPYHGKERRRSRSSAAGGTLGVVRRASRKSLPPHAR) is disordered. The segment at 106–225 (CLTLSGMGYY…YVIFPGTSAH (120 aa)) adopts a CCCH-type zinc-finger fold.

The protein belongs to the herpesviridae NEC1 protein family. As to quaternary structure, forms a heterohexameric complex with NEC2. Interacts with capsid vertex specific component 2/CVC2; this interaction directs the capsid to the host inner nuclear membrane to initiate budding. Phosphorylated at serine residues in the N-terminus. This phosphorylation regulates the localization within the inner nuclear membrane.

The protein localises to the host nucleus inner membrane. Its function is as follows. Plays an essential role in virion nuclear egress, the first step of virion release from infected cell. Within the host nucleus, NEC1 interacts with the newly formed capsid through the vertexes and directs it to the inner nuclear membrane by associating with NEC2. Induces the budding of the capsid at the inner nuclear membrane as well as its envelopment into the perinuclear space. There, the NEC1/NEC2 complex promotes the fusion of the enveloped capsid with the outer nuclear membrane and the subsequent release of the viral capsid into the cytoplasm where it will reach the secondary budding sites in the host Golgi or trans-Golgi network. The protein is Nuclear egress protein 1 of Human herpesvirus 1 (strain 17) (HHV-1).